A 593-amino-acid chain; its full sequence is Serine/threonine-protein kinase PAK 4 (593 aa).

A CRIB domain is found at 11–24; the sequence is ISAPSNFEHRVHTG. The linker stretch occupies residues 25 to 322; it reads FDQHEQKFTG…VVDPGDPRSY (298 aa). Ser41 carries the post-translational modification Phosphoserine. Lys78 is modified (N6-methyllysine). The tract at residues 95–303 is disordered; sequence TRSNSLRRES…PQREPQRVSH (209 aa). At Ser104 the chain carries Phosphoserine. Residues 118-133 show a composition bias toward basic and acidic residues; sequence LEERAAPARMAPDKAG. Residue Ser148 is modified to Phosphoserine. A compositionally biased stretch (basic and acidic residues) spans 149–164; it reads GDRRRVGPEKRPKSSR. Position 181 is a phosphoserine (Ser181). Residues 184–197 are compositionally biased toward polar residues; sequence DVSTPQPGSLTSGT. Residue Thr187 is modified to Phosphothreonine. Ser195 bears the Phosphoserine mark. Thr207 is modified (phosphothreonine). Residues 238–258 are compositionally biased toward low complexity; that stretch reads AAPQSSSSSRPPTRARGAPSP. Phosphoserine occurs at positions 257 and 266. Over residues 267–280 the composition is skewed to low complexity; that stretch reads EPQLAPPARALAAP. Pro residues predominate over residues 281-292; sequence AVPPAPGPPGPR. Ser293 is subject to Phosphoserine. Basic and acidic residues predominate over residues 294-303; it reads PQREPQRVSH. The Protein kinase domain occupies 323–574; sequence LDNFIKIGEG…AAELLKHPFL (252 aa). Residues 329 to 337 and Lys352 contribute to the ATP site; that span reads IGEGSTGIV. Residue Asp442 is the Proton acceptor of the active site. Residue Ser476 is modified to Phosphoserine; by autocatalysis.

It belongs to the protein kinase superfamily. STE Ser/Thr protein kinase family. STE20 subfamily. As to quaternary structure, interacts tightly with GTP-bound but not GDP-bound CDC42/p21 and weakly with RAC1. Interacts with FGFR2 and GRB2. Interacts with INKA1. Interacts with SH3RF2. Interacts with RHOU and PAXI; the PAK4-RHOU complex protects RHOU from ubiquitination and acts as a scaffold to suppport paxillin/PAXI phosphorylation. In terms of processing, autophosphorylated on serine residues when activated by CDC42/p21. Phosphorylated on tyrosine residues upon stimulation of FGFR2. Methylated by SETD6. Polyubiquitinated, leading to its proteasomal degradation.

It is found in the cytoplasm. It carries out the reaction L-seryl-[protein] + ATP = O-phospho-L-seryl-[protein] + ADP + H(+). The enzyme catalyses L-threonyl-[protein] + ATP = O-phospho-L-threonyl-[protein] + ADP + H(+). With respect to regulation, inhibited by INKA1; which inhibits the serine/threonine-protein kinase activity by binding PAK4 in a substrate-like manner. Serine/threonine protein kinase that plays a role in a variety of different signaling pathways including cytoskeleton regulation, cell migration, growth, proliferation or cell survival. Activation by various effectors including growth factor receptors or active CDC42 and RAC1 results in a conformational change and a subsequent autophosphorylation on several serine and/or threonine residues. Phosphorylates and inactivates the protein phosphatase SSH1, leading to increased inhibitory phosphorylation of the actin binding/depolymerizing factor cofilin. Decreased cofilin activity may lead to stabilization of actin filaments. Phosphorylates LIMK1, a kinase that also inhibits the activity of cofilin. Phosphorylates integrin beta5/ITGB5 and thus regulates cell motility. Phosphorylates ARHGEF2 and activates the downstream target RHOA that plays a role in the regulation of assembly of focal adhesions and actin stress fibers. Stimulates cell survival by phosphorylating the BCL2 antagonist of cell death BAD. Alternatively, inhibits apoptosis by preventing caspase-8 binding to death domain receptors in a kinase independent manner. Plays a role in cell-cycle progression by controlling levels of the cell-cycle regulatory protein CDKN1A and by phosphorylating RAN. Promotes kinase-independent stabilization of RHOU, thereby contributing to focal adhesion disassembly during cell migration. The sequence is that of Serine/threonine-protein kinase PAK 4 from Mus musculus (Mouse).